The chain runs to 137 residues: Large ribosomal subunit protein uL16 (137 aa).

The protein belongs to the universal ribosomal protein uL16 family. In terms of assembly, part of the 50S ribosomal subunit.

Binds 23S rRNA and is also seen to make contacts with the A and possibly P site tRNAs. The polypeptide is Large ribosomal subunit protein uL16 (Dinoroseobacter shibae (strain DSM 16493 / NCIMB 14021 / DFL 12)).